Reading from the N-terminus, the 175-residue chain is Ribosome maturation factor RimM (175 aa).

A PRC barrel domain is found at 100 to 173; that stretch reads EGEYYFHEII…TIIIRPMEGL (74 aa).

This sequence belongs to the RimM family. As to quaternary structure, binds ribosomal protein uS19.

Its subcellular location is the cytoplasm. Functionally, an accessory protein needed during the final step in the assembly of 30S ribosomal subunit, possibly for assembly of the head region. Essential for efficient processing of 16S rRNA. May be needed both before and after RbfA during the maturation of 16S rRNA. It has affinity for free ribosomal 30S subunits but not for 70S ribosomes. This Geobacillus kaustophilus (strain HTA426) protein is Ribosome maturation factor RimM.